We begin with the raw amino-acid sequence, 120 residues long: MYAIVRDRGMQYRVEEGQALDIALLDAEPGSEIELGDVLLIGGEQPRVGTPTVDGAKVVATVLGTIKGDKIVVFRYKNKKRYRRRTGHRQEYTRVSISKIIVDADEQHVTGSMEGETNGA.

The protein belongs to the bacterial ribosomal protein bL21 family. As to quaternary structure, part of the 50S ribosomal subunit. Contacts protein L20.

Its function is as follows. This protein binds to 23S rRNA in the presence of protein L20. This Roseiflexus sp. (strain RS-1) protein is Large ribosomal subunit protein bL21.